The following is a 450-amino-acid chain: Phosphoglucosamine mutase (450 aa).

The active-site Phosphoserine intermediate is the serine 102. Residues serine 102, aspartate 243, aspartate 245, and aspartate 247 each coordinate Mg(2+). Serine 102 bears the Phosphoserine mark.

This sequence belongs to the phosphohexose mutase family. The cofactor is Mg(2+). Activated by phosphorylation.

It carries out the reaction alpha-D-glucosamine 1-phosphate = D-glucosamine 6-phosphate. Catalyzes the conversion of glucosamine-6-phosphate to glucosamine-1-phosphate. The sequence is that of Phosphoglucosamine mutase from Agrobacterium fabrum (strain C58 / ATCC 33970) (Agrobacterium tumefaciens (strain C58)).